A 264-amino-acid polypeptide reads, in one-letter code: tRNA-uridine aminocarboxypropyltransferase A (264 aa).

Residues Cys25, Cys28, Cys35, and Cys37 each coordinate Zn(2+). The DXTW motif lies at 144–147 (DATW). A disordered region spans residues 245–264 (RPKLLKKRFQNQQPLEQEEE). Residues 254-264 (QNQQPLEQEEE) are compositionally biased toward polar residues.

The protein belongs to the TDD superfamily. DTWD2 family.

It catalyses the reaction a uridine in tRNA + S-adenosyl-L-methionine = a 3-[(3S)-3-amino-3-carboxypropyl]uridine in tRNA + S-methyl-5'-thioadenosine + H(+). Catalyzes the formation of 3-(3-amino-3-carboxypropyl)uridine (acp3U) at position 20a in the D-loop of several cytoplasmic tRNAs (acp3U(20a)). In Arabidopsis thaliana (Mouse-ear cress), this protein is tRNA-uridine aminocarboxypropyltransferase A.